A 379-amino-acid chain; its full sequence is UDP-4-amino-4-deoxy-L-arabinose--oxoglutarate aminotransferase (379 aa).

Lysine 182 bears the N6-(pyridoxal phosphate)lysine mark.

The protein belongs to the DegT/DnrJ/EryC1 family. ArnB subfamily. In terms of assembly, homodimer. Pyridoxal 5'-phosphate serves as cofactor.

The catalysed reaction is UDP-4-amino-4-deoxy-beta-L-arabinose + 2-oxoglutarate = UDP-beta-L-threo-pentopyranos-4-ulose + L-glutamate. The protein operates within nucleotide-sugar biosynthesis; UDP-4-deoxy-4-formamido-beta-L-arabinose biosynthesis; UDP-4-deoxy-4-formamido-beta-L-arabinose from UDP-alpha-D-glucuronate: step 2/3. It participates in bacterial outer membrane biogenesis; lipopolysaccharide biosynthesis. Its function is as follows. Catalyzes the conversion of UDP-4-keto-arabinose (UDP-Ara4O) to UDP-4-amino-4-deoxy-L-arabinose (UDP-L-Ara4N). The modified arabinose is attached to lipid A and is required for resistance to polymyxin and cationic antimicrobial peptides. In Enterobacter sp. (strain 638), this protein is UDP-4-amino-4-deoxy-L-arabinose--oxoglutarate aminotransferase.